A 1495-amino-acid polypeptide reads, in one-letter code: Nuclear pore complex protein NUP160 (1495 aa).

As to quaternary structure, part of the nuclear pore complex (NPC). The NPC has an eight-fold symmetrical structure comprising a central transport channel and two rings, the cytoplasmic and nuclear rings, to which eight filaments are attached. The cytoplasmic filaments have loose ends, while the nuclear filaments are joined in a distal ring, forming a nuclear basket. NPCs are highly dynamic in configuration and composition, and can be devided in 3 subcomplexes, the NUP62 subcomplex, the NUP107-160 subcomplex and the NUP93 subcomplex, containing approximately 30 different nucleoporin proteins. Expressed in roots, stems, anthers, siliques and vascular tissues of cotyledons, leaves and hypocotyls.

Its subcellular location is the nucleus membrane. The protein resides in the nucleus. It is found in the nuclear pore complex. In terms of biological role, contributes to the transfer of mature mRNA from the nucleus to the cytosol. Required for both R gene-mediated and basal disease resistance. RNA export seems to play a critical role in stress responses and regulation of plant growth and development. Required for proper expression of factors associated with auxin signaling. The chain is Nuclear pore complex protein NUP160 from Arabidopsis thaliana (Mouse-ear cress).